The primary structure comprises 716 residues: ATP-dependent DNA helicase DinG (716 aa).

Positions 1 to 114 (MALTAALKAQ…PDLKFTAAFG (114 aa)) are HD1 domain N-terminus. Positions 17 to 294 (ALQEQIPDFI…TCMEQFRPKT (278 aa)) constitute a Helicase ATP-binding domain. ATP contacts are provided by isoleucine 26, glutamine 31, lysine 60, and threonine 61. The [4Fe-4S] domain stretch occupies residues 115–216 (RGRYVCPRNL…FFVARREIQE (102 aa)). [4Fe-4S] cluster is bound by residues cysteine 120, cysteine 194, cysteine 199, and cysteine 205. Residues 217 to 261 (AEVVVANHALVMAAMESEAVLPDPKNLLLVLDEGHHLPDVARDAL) form an HD1 domain middle region. The short motif at 248 to 251 (DEGH) is the DEAH box element. Residues 262-438 (EMSAEITAPW…LHLWFHCVGI (177 aa)) are arch domain. An HD1 domain middle region spans residues 439–491 (RVSDQLERLLWRSIPHIIVTSATLRSLNSFSRLQEMSGLKEKAGDRFVALDSP). Residues 492 to 716 (FNHCEQGKIV…KTKSPRRRRR (225 aa)) form an HD2 domain region. ATP-binding residues include aspartate 599, arginine 656, and arginine 659.

The protein belongs to the helicase family. DinG subfamily. Type 1 sub-subfamily. As to quaternary structure, monomer in solution. The cofactor is [4Fe-4S] cluster. Mg(2+) is required as a cofactor.

It carries out the reaction Couples ATP hydrolysis with the unwinding of duplex DNA at the replication fork by translocating in the 5'-3' direction. This creates two antiparallel DNA single strands (ssDNA). The leading ssDNA polymer is the template for DNA polymerase III holoenzyme which synthesizes a continuous strand.. The catalysed reaction is ATP + H2O = ADP + phosphate + H(+). ATPase activity is 15-fold stimulated by single-stranded DNA (ssDNA). Reduction of the [4Fe-4S] cluster reversibly switches off helicase activity. Remains fully active after exposure to 100-fold excess of hydrogen peroxide, but the [4Fe-4S] cluster can be efficiently modified by nitric oxide (NO), forming the DinG-bound dinitrosyl iron complex with the concomitant inactivation of helicase activity. Helicase activity on G-quadruplex DNA is inhibited by porphyrin derivatives meso-tetra (N-methyl-4-pyridyl) porphine tetra tosylate (T4) and N-methyl mesoporphyrin IX (NMM). Helicase activity on forked duplexes is not inhibited by T4 or NMM. G-quadruplex ligands such as Pyridostatin, PhenDC3, BRACO-19 and Netropsin can alter recognition and unwinding of G-quadruplex DNAs; the effect is both ligand- and G-quadruplex DNA-specific. Functionally, DNA-dependent ATPase and 5'-3' DNA helicase. Can also unwind DNA:RNA hybrid duplexes. Is active on D-loops, R-loops, and on forked structures. Unwinds G-quadruplex DNA in a 5'-3' direction; unwinding efficiency differs on different substrates. Does not appear to unwind replication forks or Holliday junctions. Translocates on single-stranded (ss)DNA with a 5'-3' polarity. In vitro at high concentrations also unwinds in a 3'-5' direction. May be involved in recombinational DNA repair and the resumption of replication after DNA damage. The [4Fe-4S] cluster is redox active at cellular potentials and is involved in DNA-mediated charge-transport signaling between DNA repair proteins from distinct pathways. DinG cooperates at long-range with endonuclease III, a base excision repair enzyme, using DNA charge transport to redistribute to regions of DNA damage. Binds 10-11 nucleotides of ssDNA in a positively-charged groove across the helicase domains. The chain is ATP-dependent DNA helicase DinG from Escherichia coli (strain K12).